The chain runs to 175 residues: NADH-ubiquinone oxidoreductase chain 6 (175 aa).

Helical transmembrane passes span 1 to 21 (MMTY…VGFS), 25 to 45 (SPIY…GIVL), 47 to 67 (FGGS…MMVV), 88 to 108 (VVLG…YYVL), and 149 to 169 (YGTW…VVIM).

This sequence belongs to the complex I subunit 6 family. As to quaternary structure, core subunit of respiratory chain NADH dehydrogenase (Complex I) which is composed of 45 different subunits.

It localises to the mitochondrion inner membrane. It carries out the reaction a ubiquinone + NADH + 5 H(+)(in) = a ubiquinol + NAD(+) + 4 H(+)(out). Functionally, core subunit of the mitochondrial membrane respiratory chain NADH dehydrogenase (Complex I) which catalyzes electron transfer from NADH through the respiratory chain, using ubiquinone as an electron acceptor. Essential for the catalytic activity and assembly of complex I. In Ovis aries (Sheep), this protein is NADH-ubiquinone oxidoreductase chain 6 (MT-ND6).